The following is a 359-amino-acid chain: MNITKDVSRLGQSLWLDNLSRDLLRDGALAKMIAEDGVSGVTSNPSIFQNALATSPHYADDLARLRREEADVERRYEALVIPDIRDACDLLLPLFERSAGNDGYVSLEVAPRLAYDTSGTVDEARRLWSLVDRPNLLVKVPGTPEGVDAFETLTQLGINVNVTLLFSIAQAQAVFDAYVRGLGKRAASGADLRRAKAVASLFLSRVDTAVDAELAGIGTQESLSLRGKAAVAMAKLAYQAYLETFRGPAFTALAARGARPQFLLWASTGVKNPDYHDLLYVEPLIGRETINTLPDKTLAALRDHGQPVPQLEQAVDEASAQLAEFARLGVDLDAVAARLQDAGVKQFETSYQALLAQIG.

The Schiff-base intermediate with substrate role is filled by Lys139.

It belongs to the transaldolase family. Type 2 subfamily.

Its subcellular location is the cytoplasm. The enzyme catalyses D-sedoheptulose 7-phosphate + D-glyceraldehyde 3-phosphate = D-erythrose 4-phosphate + beta-D-fructose 6-phosphate. The protein operates within carbohydrate degradation; pentose phosphate pathway; D-glyceraldehyde 3-phosphate and beta-D-fructose 6-phosphate from D-ribose 5-phosphate and D-xylulose 5-phosphate (non-oxidative stage): step 2/3. Functionally, transaldolase is important for the balance of metabolites in the pentose-phosphate pathway. This chain is Transaldolase, found in Thiobacillus denitrificans (strain ATCC 25259 / T1).